Consider the following 556-residue polypeptide: CTP synthase (556 aa).

The amidoligase domain stretch occupies residues 1–266 (MKYIFVTGGV…GKVVEDLLGL (266 aa)). Ser-12 contributes to the CTP binding site. Ser-12 provides a ligand contact to UTP. Residue 13-18 (SLGKGV) participates in ATP binding. Tyr-53 lines the L-glutamine pocket. Asp-70 contributes to the ATP binding site. Residues Asp-70 and Glu-140 each contribute to the Mg(2+) site. Residues 147–149 (DIE), 187–192 (KTKPTQ), and Lys-223 each bind CTP. Residues 187–192 (KTKPTQ) and Lys-223 each bind UTP. In terms of domain architecture, Glutamine amidotransferase type-1 spans 291 to 544 (TIAIAGKYTE…VKAALRGQSS (254 aa)). L-glutamine is bound at residue Gly-356. Catalysis depends on Cys-383, which acts as the Nucleophile; for glutamine hydrolysis. L-glutamine-binding positions include 384-387 (LGMQ), Glu-407, and Arg-467. Catalysis depends on residues His-517 and Glu-519.

Belongs to the CTP synthase family. Homotetramer.

The catalysed reaction is UTP + L-glutamine + ATP + H2O = CTP + L-glutamate + ADP + phosphate + 2 H(+). It catalyses the reaction L-glutamine + H2O = L-glutamate + NH4(+). The enzyme catalyses UTP + NH4(+) + ATP = CTP + ADP + phosphate + 2 H(+). It functions in the pathway pyrimidine metabolism; CTP biosynthesis via de novo pathway; CTP from UDP: step 2/2. Allosterically activated by GTP, when glutamine is the substrate; GTP has no effect on the reaction when ammonia is the substrate. The allosteric effector GTP functions by stabilizing the protein conformation that binds the tetrahedral intermediate(s) formed during glutamine hydrolysis. Inhibited by the product CTP, via allosteric rather than competitive inhibition. Its function is as follows. Catalyzes the ATP-dependent amination of UTP to CTP with either L-glutamine or ammonia as the source of nitrogen. Regulates intracellular CTP levels through interactions with the four ribonucleotide triphosphates. This chain is CTP synthase, found in Deinococcus deserti (strain DSM 17065 / CIP 109153 / LMG 22923 / VCD115).